A 442-amino-acid chain; its full sequence is D-serine dehydratase (442 aa).

Lys118 carries the N6-(pyridoxal phosphate)lysine modification.

Belongs to the serine/threonine dehydratase family. DsdA subfamily. Monomer. Pyridoxal 5'-phosphate serves as cofactor.

It catalyses the reaction D-serine = pyruvate + NH4(+). This Escherichia coli O139:H28 (strain E24377A / ETEC) protein is D-serine dehydratase.